Consider the following 1041-residue polypeptide: Leucine-rich repeat receptor-like protein kinase TDR (1041 aa).

Residues 1–29 (MKKKNISPSLVLHPLLLLLLPFFAFNSLA) form the signal peptide. Topologically, residues 30 to 652 (LKFSPQLLSL…HHKEERPKKT (623 aa)) are extracellular. A disulfide bridge connects residues Cys69 and Cys76. N-linked (GlcNAc...) asparagine glycosylation is found at Asn78, Asn92, and Asn111. LRR repeat units follow at residues 80–104 (TAQV…IRYL), 105–128 (SSLL…IFDL), 130–152 (KLTT…ISKL), 154–176 (FLKV…VSRL), 177–199 (RFLE…AYGG), 200–224 (LQRL…LGLL), 225–248 (TELQ…FALL), 250–272 (NLKY…LGNL), 273–296 (SNLE…YSNL), 297–319 (KSLK…GFST), 321–344 (KNLT…IGEL), 345–368 (PELT…LGSN), 369–392 (GKLE…LCHG), 394–416 (KLYK…LTRC), 418–439 (SLWR…GFGS), 440–464 (LRNL…FATA), 466–488 (VLQY…IWKA), 511–535 (CKSF…IGHC), 536–558 (EKLL…EIST), 559–583 (LPSI…FGSS), and 585–607 (TITT…SFAH). Residues 186–188 (GSY) are CLE peptide binding. Residues 233 to 235 (GYN) are CLE peptide binding. Residues Asn258 and Asn271 are each glycosylated (N-linked (GlcNAc...) asparagine). The tract at residues 303-307 (DFSSN) is CLE peptide binding. N-linked (GlcNAc...) asparagine glycosylation is found at Asn322, Asn332, and Asn356. Positions 375 to 377 (DVS) are CLE peptide binding. Asn378 carries N-linked (GlcNAc...) asparagine glycosylation. The cysteines at positions 390 and 416 are disulfide-linked. Positions 421-423 (RFR) are CLE peptide binding. Asn430, Asn442, Asn471, Asn525, and Asn542 each carry an N-linked (GlcNAc...) asparagine glycan. Cys511 and Cys535 form a disulfide bridge. An N-linked (GlcNAc...) asparagine glycan is attached at Asn590. A disulfide bond links Cys620 and Cys628. A helical transmembrane segment spans residues 653 to 673 (AGAIVWILAAAIGVGFFVLVA). The Cytoplasmic segment spans residues 674–1041 (ATRCFQKSYG…HDVKCQRIGV (368 aa)). A Phosphothreonine modification is found at Thr710. Positions 719 to 1001 (SKTDNILGMG…DVLLILQEAK (283 aa)) constitute a Protein kinase domain. Residues 725–733 (LGMGSTGTV) and Lys747 contribute to the ATP site. A phosphotyrosine mark is found at Tyr798 and Tyr839. The Proton acceptor role is filled by Asp852. Ser884 is modified (phosphoserine). Residues Tyr892 and Tyr899 each carry the phosphotyrosine modification. Thr900 is subject to Phosphothreonine.

The protein belongs to the protein kinase superfamily. Ser/Thr protein kinase family. Interacts specifically with the mature peptides CLE41p and CLE44p, especially in the presence of SERK2. Interacts with LURE1.2. Widely expressed along the vascular strands. In roots and hypocotyls, confined to procambial cells.

Its subcellular location is the cell membrane. It catalyses the reaction L-seryl-[protein] + ATP = O-phospho-L-seryl-[protein] + ADP + H(+). It carries out the reaction L-threonyl-[protein] + ATP = O-phospho-L-threonyl-[protein] + ADP + H(+). In terms of biological role, acts with CLE41p and CLE44p peptides as a ligand-receptor pair in a signal transduction pathway involved in the regulation of procambium maintenance and polarity during vascular-tissue development. Mediates repression of tracheary element differentiation and the promotion of procambial cells formation and polar division adjacent to phloem cells in the veins. This is Leucine-rich repeat receptor-like protein kinase TDR from Arabidopsis thaliana (Mouse-ear cress).